The following is a 244-amino-acid chain: Membrane-spanning 4-domains subfamily A member 6B (244 aa).

Residues 1-46 (MIPQVVTSETVAMISPNGMSLPQTDKPQPFHQWQDSLKKHLKAEIK) are Cytoplasmic-facing. A helical transmembrane segment spans residues 47–67 (VMAAIQIMCAVMVLSLGIILA). Residues 68 to 84 (SVPSNLHFTSVFSVLLK) are Extracellular-facing. A helical transmembrane segment spans residues 85-105 (SGYPFIGALFFIVSGILSIVT). Topologically, residues 106-121 (ETKSTKILVDSSLTLN) are cytoplasmic. A helical membrane pass occupies residues 122-142 (ILSVSFAFMGIIIISVSLAGL). Topologically, residues 143 to 176 (HPASEQCLQSKELRPTEYHYYQFLDRNECFAAKS) are extracellular. Residues 177–197 (VLAGVFSLMLISTMLELGLAV) form a helical membrane-spanning segment. At 198–244 (LTAMLWWKQSHSNIPGNVMFLPHSSNNDSNMESKVLCNPSYEEQLVC) the chain is on the cytoplasmic side.

Belongs to the MS4A family. As to expression, expressed at high levels in thymus, spleen, and peripheral lymph nodes, with less abundant levels in non-lymphoid tissues.

It localises to the membrane. Its function is as follows. May be involved in signal transduction as a component of a multimeric receptor complex. This Mus musculus (Mouse) protein is Membrane-spanning 4-domains subfamily A member 6B (Ms4a6b).